The sequence spans 791 residues: Ataxin-2 homolog (791 aa).

Positions 1–22 (MATRSVSMKQTSQRAASPNKTQ) are enriched in polar residues. Disordered stretches follow at residues 1 to 28 (MATR…KKWS), 60 to 100 (RGGV…QQRV), 112 to 134 (RTET…GVPL), 235 to 311 (TRSN…KEGQ), 326 to 423 (SLDS…TKLG), 452 to 505 (KPAP…PVSS), 613 to 634 (NPSQ…GNSS), and 707 to 791 (PMYG…EAKP). Low complexity predominate over residues 76–96 (SLASSEENVSSVSGSAKSNNS). 2 stretches are compositionally biased toward basic and acidic residues: residues 112–125 (RTET…RWMP) and 243–256 (NNKD…EAPH). Polar residues predominate over residues 326-337 (SLDSKQPSSTKS). 2 stretches are compositionally biased toward basic and acidic residues: residues 360 to 371 (DSKEPRKEEAEK) and 395 to 418 (SKEE…KETT). A compositionally biased stretch (low complexity) spans 473 to 486 (SIPSTTPQSPSVVS). Residues 487–497 (NGENKPSSSPV) show a composition bias toward polar residues. 2 stretches are compositionally biased toward low complexity: residues 715–725 (SNSQRSFNSSN) and 734–760 (NNNA…NTTA). Residues 774–791 (DATEKTEKDASANQEAKP) show a composition bias toward basic and acidic residues.

This sequence belongs to the ataxin-2 family. In terms of assembly, interacts with mkt1.

It is found in the cytoplasm. Involved in post-transcriptional regulation of gene expression, probably by association with mkt1. The sequence is that of Ataxin-2 homolog from Schizosaccharomyces pombe (strain 972 / ATCC 24843) (Fission yeast).